The sequence spans 593 residues: Serine/threonine-protein kinase SSN3 (593 aa).

Residues 90-489 enclose the Protein kinase domain; sequence YEIIGYIAAG…AIDALDHVYF (400 aa). 96-104 contributes to the ATP binding site; that stretch reads IAAGTYGKV. The tract at residues 161 to 199 is disordered; it reads KPSHKRFTPPNNSNSTQIRSNSGSETNVRINSSSITNNS. A compositionally biased stretch (polar residues) spans 169 to 185; that stretch reads PPNNSNSTQIRSNSGSE. Low complexity predominate over residues 186-199; sequence TNVRINSSSITNNS. Lysine 211 is an ATP binding site. Aspartate 312 functions as the Proton acceptor in the catalytic mechanism. Disordered stretches follow at residues 517-551 and 569-593; these read DNDI…NMNG and AAVS…KKRK. Residues 518–536 are compositionally biased toward polar residues; the sequence is NDITNVGNDNNQANHSQKQ. Positions 540–551 are enriched in low complexity; that stretch reads GNNNNKNGNMNG. Residues 573–585 show a composition bias toward polar residues; the sequence is GNGNNPTSNTATG.

The protein belongs to the protein kinase superfamily. CMGC Ser/Thr protein kinase family. CDC2/CDKX subfamily. As to quaternary structure, component of the SRB8-11 complex, a regulatory module of the Mediator complex. Requires Mg(2+) as cofactor.

It is found in the nucleus. The catalysed reaction is L-seryl-[protein] + ATP = O-phospho-L-seryl-[protein] + ADP + H(+). It catalyses the reaction L-threonyl-[protein] + ATP = O-phospho-L-threonyl-[protein] + ADP + H(+). The enzyme catalyses [DNA-directed RNA polymerase] + ATP = phospho-[DNA-directed RNA polymerase] + ADP + H(+). In terms of biological role, component of the SRB8-11 complex. The SRB8-11 complex is a regulatory module of the Mediator complex which is itself involved in regulation of basal and activated RNA polymerase II-dependent transcription. The SRB8-11 complex may be involved in the transcriptional repression of a subset of genes regulated by Mediator. It may inhibit the association of the Mediator complex with RNA polymerase II to form the holoenzyme complex. The SRB8-11 complex phosphorylates the C-terminal domain (CTD) of the largest subunit of RNA polymerase II. This is Serine/threonine-protein kinase SSN3 (SSN3) from Kluyveromyces lactis (strain ATCC 8585 / CBS 2359 / DSM 70799 / NBRC 1267 / NRRL Y-1140 / WM37) (Yeast).